The sequence spans 148 residues: MRAVVQRSLEAKVTIEGNTVGTIDHGFVVLLGVGPTDTEAESDYLAEKISKLRVFSDPVGKMNLALADVGGQVLSISQFTLYADTHRGNRPSFTGAADPALGDRLYQAFNAKLKALGVPVATGEFGGDMQVSLTNDGPVTILFDTEAK.

The Gly-cisPro motif, important for rejection of L-amino acids signature appears at 137 to 138 (GP).

This sequence belongs to the DTD family. Homodimer.

It is found in the cytoplasm. The enzyme catalyses glycyl-tRNA(Ala) + H2O = tRNA(Ala) + glycine + H(+). The catalysed reaction is a D-aminoacyl-tRNA + H2O = a tRNA + a D-alpha-amino acid + H(+). In terms of biological role, an aminoacyl-tRNA editing enzyme that deacylates mischarged D-aminoacyl-tRNAs. Also deacylates mischarged glycyl-tRNA(Ala), protecting cells against glycine mischarging by AlaRS. Acts via tRNA-based rather than protein-based catalysis; rejects L-amino acids rather than detecting D-amino acids in the active site. By recycling D-aminoacyl-tRNA to D-amino acids and free tRNA molecules, this enzyme counteracts the toxicity associated with the formation of D-aminoacyl-tRNA entities in vivo and helps enforce protein L-homochirality. This Lacticaseibacillus casei (strain BL23) (Lactobacillus casei) protein is D-aminoacyl-tRNA deacylase.